Here is a 683-residue protein sequence, read N- to C-terminus: Solute carrier family 28 member 3 (683 aa).

A disordered region spans residues 1-71; sequence MSAFKARGVE…EEEEEGEEDQ (71 aa). At 1 to 97 the chain is on the cytoplasmic side; it reads MSAFKARGVE…FYKRNKKIIH (97 aa). The segment covering 60 to 71 has biased composition (acidic residues); the sequence is DNEEEEEGEEDQ. Residues 98-118 traverse the membrane as a helical segment; that stretch reads YTFLGLLLVGYFALVIAACIV. Residues 119 to 123 are Extracellular-facing; the sequence is NFKQS. The chain crosses the membrane as a helical span at residues 124–144; the sequence is LALLVLTLIAIFFFFWDLFIA. The Cytoplasmic portion of the chain corresponds to 145–168; the sequence is KYGDKIAEALKPCQKFLDNHWSII. Residues 169–189 traverse the membrane as a helical segment; sequence RWFVYGALLLAVILWLTLDTA. Residues 190–192 are Extracellular-facing; it reads KRG. The helical transmembrane segment at 193–214 threads the bilayer; it reads ANQVIPFFGLILYILLVFIFSK. Residues 215 to 222 are Cytoplasmic-facing; that stretch reads HPTKVRWR. The chain crosses the membrane as a helical span at residues 223–242; the sequence is IVIWGLLLQFIFGLIILRTK. At 243–279 the chain is on the extracellular side; that stretch reads PGLDAFNWLGIQVQTFLKYTDAGSRFLFGDDFQDHFF. The chain crosses the membrane as a helical span at residues 280–300; that stretch reads AFAVLPIVIFFSTVMSMMYYL. Residues 301-324 are Cytoplasmic-facing; that stretch reads GLMQWLILKVGWLMQITMGTSPME. An intramembrane region (helical) is located at residues 325–343; it reads SMVSAGNIFVGQTESPLLI. Residues 344-356 lie on the Cytoplasmic side of the membrane; the sequence is RPYLADLTISEMH. The helical transmembrane segment at 357–379 threads the bilayer; that stretch reads SVMSSGFATIAGSVLGAYISLGI. Residues 380–381 lie on the Extracellular side of the membrane; sequence PA. The chain crosses the membrane as a helical span at residues 382 to 403; the sequence is AHLLTASVMSAPAALAISKTFW. At 404-438 the chain is on the cytoplasmic side; sequence PETKKSKNSTQTSIKLEKGQENNLVEAASQGASAA. The helical transmembrane segment at 439 to 464 threads the bilayer; that stretch reads VPLVANIAANLIAFLAVLAFINATLS. At 465–502 the chain is on the extracellular side; that stretch reads WLGSMFNYPQFSFEIICSYVLMPFAFMMGVNYDDSFLV. The helical intramembrane region spans 503-522; it reads AELLGMKTFFNEFVAYQRLS. The Extracellular portion of the chain corresponds to 523-561; the sequence is EYIHNRESGGPLFVDGVRQYMSVRSEAIATYALCGFANF. A helical membrane pass occupies residues 562-572; it reads GSLGIMIGGLS. The Cytoplasmic portion of the chain corresponds to 573 to 585; that stretch reads SLAPHRKSDIASC. The helical transmembrane segment at 586–608 threads the bilayer; that stretch reads GIRALIAGTIACFSTACIAGVLY. Residues 609 to 683 lie on the Extracellular side of the membrane; that stretch reads IPELYCPNLL…GFNCSEVRPE (75 aa).

It belongs to the concentrative nucleoside transporter (CNT) (TC 2.A.41) family. In terms of assembly, homotrimer.

Its subcellular location is the cell membrane. The enzyme catalyses thymidine(out) + 2 Na(+)(out) = thymidine(in) + 2 Na(+)(in). It carries out the reaction cytidine(out) + 2 Na(+)(out) = cytidine(in) + 2 Na(+)(in). The catalysed reaction is uridine(out) + 2 Na(+)(out) = uridine(in) + 2 Na(+)(in). It catalyses the reaction adenosine(out) + 2 Na(+)(out) = adenosine(in) + 2 Na(+)(in). The enzyme catalyses guanosine(out) + 2 Na(+)(out) = guanosine(in) + 2 Na(+)(in). It carries out the reaction inosine(out) + 2 Na(+)(out) = inosine(in) + 2 Na(+)(in). In terms of biological role, sodium-dependent, pyrimidine- and purine-selective. Involved in the homeostasis of endogenous nucleosides. Exhibits the transport characteristics of the nucleoside transport system cib or N3 subtype (N3/cib) (with marked transport of both thymidine and inosine). Employs a 2:1 sodium/nucleoside ratio. Also able to transport gemcitabine, 3'-azido-3'-deoxythymidine (AZT), ribavirin and 3-deazauridine. The polypeptide is Solute carrier family 28 member 3 (SLC28A3) (Eptatretus stoutii (Pacific hagfish)).